The primary structure comprises 325 residues: UPF0285 protein MmarC5_0962 (325 aa).

The protein belongs to the UPF0285 family.

The polypeptide is UPF0285 protein MmarC5_0962 (Methanococcus maripaludis (strain C5 / ATCC BAA-1333)).